Here is a 172-residue protein sequence, read N- to C-terminus: Keratin-associated protein 13-3 (172 aa).

5 consecutive repeat copies span residues 46–55, 56–65, 66–75, 76–85, and 92–101. The tract at residues 46-101 is 5 X 10 AA approximate repeats; it reads CQLGSSLYRGCQETCWRPNSCQTLCVESSPCHTSCYYPRTHMLCNSCLTMHVGSRG.

It belongs to the PMG family. In terms of assembly, interacts with hair keratins.

In the hair cortex, hair keratin intermediate filaments are embedded in an interfilamentous matrix, consisting of hair keratin-associated proteins (KRTAP), which are essential for the formation of a rigid and resistant hair shaft through their extensive disulfide bond cross-linking with abundant cysteine residues of hair keratins. The matrix proteins include the high-sulfur and high-glycine-tyrosine keratins. The protein is Keratin-associated protein 13-3 (KRTAP13-3) of Homo sapiens (Human).